The chain runs to 306 residues: Stimulator of interferon genes protein 5 (306 aa).

Residues 1 to 50 (MMSNDSQSEKRTAKWTGSGTPIAEGEESSSPSAHQTRQKATAADDDDDQQ) form a disordered region. 3 residues coordinate 2',3'-cGAMP: Tyr-119, Arg-180, and Arg-186.

The protein belongs to the STING family.

Functionally, facilitator of innate immune signaling that acts as a sensor of second messenger signals produced by cyclic GMP-AMP synthase-like receptors (cGLRs) and promotes the production of type I interferon. Innate immune response is triggered in response to nucleotides from viruses and bacteria delivered to the cytoplasm. Acts by binding cyclic dinucleotides: recognizes and binds 2'-3' linked cGAMP (2'-3'-cGAMP), a second messengers produced by cGLRs in response to nucleotides in the cytosol, such as double-stranded RNA (dsRNA). Upon binding to 2'-3'-cGAMP, oligomerizes and promotes the recruitment and subsequent activation of the transcription factor IRF3 to induce expression of type I interferon. The protein is Stimulator of interferon genes protein 5 of Stylophora pistillata (Smooth cauliflower coral).